The sequence spans 897 residues: Translation initiation factor IF-2 (897 aa).

Residues Asn-402–Glu-570 form the tr-type G domain. Residues Gly-411 to Thr-418 are G1. A GTP-binding site is contributed by Gly-411 to Thr-418. The interval Gly-436–Asn-440 is G2. A G3 region spans residues Asp-458–Gly-461. Residues Asp-458 to His-462 and Asn-512 to Asp-515 contribute to the GTP site. The interval Asn-512–Asp-515 is G4. The segment at Ser-548–Val-550 is G5.

It belongs to the TRAFAC class translation factor GTPase superfamily. Classic translation factor GTPase family. IF-2 subfamily.

The protein localises to the cytoplasm. Its function is as follows. One of the essential components for the initiation of protein synthesis. Protects formylmethionyl-tRNA from spontaneous hydrolysis and promotes its binding to the 30S ribosomal subunits. Also involved in the hydrolysis of GTP during the formation of the 70S ribosomal complex. This Blochmanniella floridana protein is Translation initiation factor IF-2.